A 640-amino-acid chain; its full sequence is PAN2-PAN3 deadenylation complex subunit PAN3 (640 aa).

The C3H1-type zinc finger occupies 17–46 (ENKDILCRNVLIYGHCRYEDQGCTYNHDQN). 2 stretches are compositionally biased toward polar residues: residues 43–53 (HDQNKNSSQPE) and 63–87 (DSPSFTPSGQSTVLPKKTTLSSQAA). The interval 43 to 101 (HDQNKNSSQPEAPSKKMFNVDSPSFTPSGQSTVLPKKTTLSSQAASAAPFTPRGGGTPT) is disordered. The segment at 237 to 498 (QVIPNSGLPQ…TIEHFMTGIA (262 aa)) is pseudokinase domain. Residues asparagine 263, arginine 288, 338–345 (DFHPLSKT), and 397–398 (SK) contribute to the ATP site. Residues 499–537 (SQMTTFFDLALQDNDEKLFHLAREVENGRIARSLMKLLT) adopt a coiled-coil conformation. The knob domain stretch occupies residues 538-640 (ILERGDYDGV…SKTGAPGANT (103 aa)).

It belongs to the protein kinase superfamily. PAN3 family. Homodimer. Forms a heterotrimer with a catalytic subunit PAN2 to form the poly(A)-nuclease (PAN) deadenylation complex. Interacts (via PAM-2 motif) with poly(A)-binding protein PAB1 (via PABC domain), conferring substrate specificity of the enzyme complex.

It is found in the cytoplasm. In terms of biological role, regulatory subunit of the poly(A)-nuclease (PAN) deadenylation complex, one of two cytoplasmic mRNA deadenylases involved in mRNA turnover. PAN specifically shortens poly(A) tails of RNA and the activity is stimulated by poly(A)-binding protein PAB1. PAN deadenylation is followed by rapid degradation of the shortened mRNA tails by the CCR4-NOT complex. Deadenylated mRNAs are then degraded by two alternative mechanisms, namely exosome-mediated 3'-5' exonucleolytic degradation, or deadenylation-dependent mRNA decaping and subsequent 5'-3' exonucleolytic degradation by XRN1. May also be involved in post-transcriptional maturation of mRNA poly(A) tails. PAN3 acts as a positive regulator for PAN activity, recruiting the catalytic subunit PAN2 to mRNA via its interaction with RNA and with PAB1. This is PAN2-PAN3 deadenylation complex subunit PAN3 from Chaetomium thermophilum (strain DSM 1495 / CBS 144.50 / IMI 039719) (Thermochaetoides thermophila).